The following is a 342-amino-acid chain: Protein RecA (342 aa).

65–72 provides a ligand contact to ATP; that stretch reads GPESSGKT.

The protein belongs to the RecA family.

It localises to the cytoplasm. Can catalyze the hydrolysis of ATP in the presence of single-stranded DNA, the ATP-dependent uptake of single-stranded DNA by duplex DNA, and the ATP-dependent hybridization of homologous single-stranded DNAs. It interacts with LexA causing its activation and leading to its autocatalytic cleavage. This Teredinibacter turnerae (strain ATCC 39867 / T7901) protein is Protein RecA.